The primary structure comprises 295 residues: Glycine N-methyltransferase (295 aa).

Residue Val2 is modified to N-acetylvaline. 2 residues coordinate (6S)-5-methyl-5,6,7,8-tetrahydrofolate: Ser4 and Tyr6. Ser10 carries the phosphoserine modification. S-adenosyl-L-methionine is bound by residues Tyr22, Trp31, Tyr34, and Arg41. Tyr34 carries the phosphotyrosine modification. Lys46 is subject to N6-succinyllysine. S-adenosyl-L-methionine-binding positions include Ala65, Asp86–Ser88, Asn117–Trp118, Leu139–Ser142, and Arg178. Lys193, Lys198, and Lys203 each carry N6-succinyllysine. His217 serves as a coordination point for (6S)-5-methyl-5,6,7,8-tetrahydrofolate. Tyr223 provides a ligand contact to S-adenosyl-L-methionine. Arg242 contributes to the (6S)-5-methyl-5,6,7,8-tetrahydrofolate binding site.

Belongs to the class I-like SAM-binding methyltransferase superfamily. Glycine N-methyltransferase family. In terms of assembly, homotetramer. In terms of tissue distribution, expressed only in liver, pancreas, and prostate.

The protein resides in the cytoplasm. The enzyme catalyses glycine + S-adenosyl-L-methionine = sarcosine + S-adenosyl-L-homocysteine + H(+). Its activity is regulated as follows. Inhibited by 5-methyltetrahydrofolate monoglutamate and by 5-methyltetrahydrofolate pentaglutamate, inhibition is much more effective by the pentaglutamate form than by the monoglutamate form. Two molecules of 5-methyltetrahydrofolate are bound per tetramer. The binding sites are localized between subunits. Inhibitor binding may preclude movements of the polypeptide chain that are necessary for enzyme activity. Its function is as follows. Catalyzes the methylation of glycine by using S-adenosylmethionine (AdoMet) to form N-methylglycine (sarcosine) with the concomitant production of S-adenosylhomocysteine (AdoHcy), a reaction regulated by the binding of 5-methyltetrahydrofolate. Plays an important role in the regulation of methyl group metabolism by regulating the ratio between S-adenosyl-L-methionine and S-adenosyl-L-homocysteine. The polypeptide is Glycine N-methyltransferase (Homo sapiens (Human)).